Consider the following 292-residue polypeptide: Acetylglutamate kinase (292 aa).

Substrate is bound by residues 64–65 (GG), Arg-86, and Asn-190.

The protein belongs to the acetylglutamate kinase family. ArgB subfamily.

Its subcellular location is the cytoplasm. It carries out the reaction N-acetyl-L-glutamate + ATP = N-acetyl-L-glutamyl 5-phosphate + ADP. Its pathway is amino-acid biosynthesis; L-arginine biosynthesis; N(2)-acetyl-L-ornithine from L-glutamate: step 2/4. Functionally, catalyzes the ATP-dependent phosphorylation of N-acetyl-L-glutamate. The polypeptide is Acetylglutamate kinase (Geotalea daltonii (strain DSM 22248 / JCM 15807 / FRC-32) (Geobacter daltonii)).